A 330-amino-acid polypeptide reads, in one-letter code: MTDLSKKVRAWGRRLLVGTAAAVTLPGLIGLAGGAPTAGAFSRPGLPVEYLQVPSAGMGRNIKVQFQSGGNNSPAVYLLDGLRAQDDYNGWDINTPAFEWYYQSGLSIIMPVGGQSSFYSDWYSPACGKAGCTTYKWETFLTSELPQYLQSNKSVKPTGSAAVGISMAGSSALILAAYHPQQFIYAGSLSALMDPSQGMGPSLIGLAMGDAGGYKASDMWGPSSDPAWQRNDPTIQIPKLVGNNTRLWVYCGNGTPSELGGANMPAEFLENFVRSSNLKFQDAYNAAGGHNAVFHFDQNGTHSWEYWGAQLNAMKPDLQGTLGATPGGGG.

The first 40 residues, 1 to 40, serve as a signal peptide directing secretion; the sequence is MTDLSKKVRAWGRRLLVGTAAAVTLPGLIGLAGGAPTAGA. 82 to 83 is a binding site for substrate; that stretch reads LR. The fibronectin-binding stretch occupies residues 98–108; it reads FEWYYQSGLSI. The cysteines at positions 127 and 132 are disulfide-linked. Positions 166 and 194 each coordinate substrate. The Nucleophile role is filled by Ser-166. Glu-270 is an active-site residue. Residues 272-275, Lys-279, and 302-304 contribute to the substrate site; these read FVRS and HSW. The active site involves His-302.

The protein belongs to the mycobacterial A85 antigen family.

It is found in the secreted. It carries out the reaction 2 alpha,alpha'-trehalose 6-mycolate = alpha,alpha'-trehalose 6,6'-bismycolate + alpha,alpha-trehalose. The catalysed reaction is an acyl-CoA + a 1,2-diacyl-sn-glycerol = a triacyl-sn-glycerol + CoA. Its function is as follows. The antigen 85 proteins (FbpA, FbpB, FbpC) are responsible for the high affinity of mycobacteria for fibronectin, a large adhesive glycoprotein, which facilitates the attachment of M.tuberculosis to murine alveolar macrophages (AMs). They also help to maintain the integrity of the cell wall by catalyzing the transfer of mycolic acids to cell wall arabinogalactan and through the synthesis of alpha,alpha-trehalose dimycolate (TDM, cord factor). They catalyze the transfer of a mycoloyl residue from one molecule of alpha,alpha-trehalose monomycolate (TMM) to another TMM, leading to the formation of TDM. The sequence is that of Diacylglycerol acyltransferase/mycolyltransferase Ag85B (fbpB) from Mycobacterium scrofulaceum.